We begin with the raw amino-acid sequence, 98 residues long: NADH-ubiquinone oxidoreductase chain 4L (98 aa).

The next 3 membrane-spanning stretches (helical) occupy residues 1–21 (MPIIYMNIMLAFTISLLGMLI), 29–49 (SLLCLEGMMLSLFIMNTLMAL), and 58–78 (IVPITLLVFAACEAAVGLALL).

Belongs to the complex I subunit 4L family. Core subunit of respiratory chain NADH dehydrogenase (Complex I) which is composed of 45 different subunits.

The protein resides in the mitochondrion inner membrane. It catalyses the reaction a ubiquinone + NADH + 5 H(+)(in) = a ubiquinol + NAD(+) + 4 H(+)(out). Core subunit of the mitochondrial membrane respiratory chain NADH dehydrogenase (Complex I) which catalyzes electron transfer from NADH through the respiratory chain, using ubiquinone as an electron acceptor. Part of the enzyme membrane arm which is embedded in the lipid bilayer and involved in proton translocation. In Colobus guereza (Mantled guereza), this protein is NADH-ubiquinone oxidoreductase chain 4L (MT-ND4L).